An 801-amino-acid chain; its full sequence is Cadherin-20 (801 aa).

A signal peptide spans 1 to 34 (MWTTGRMSNAKSWLGLGTSLYFWALMDLTATVLS). Residues 35 to 59 (STPMPEVELETLFSGRSQSHQRSKR) constitute a propeptide that is removed on maturation. Residues 60–619 (SWVWNQFFVL…AYLLPVSLSR (560 aa)) are Extracellular-facing. 5 consecutive Cadherin domains span residues 61–165 (WVWN…EPKF), 166–274 (LDGP…PPRF), 275–389 (PQKH…PPVF), 390–494 (EPGF…APEF), and 494–610 (FPRF…SPEA). Residue asparagine 261 is glycosylated (N-linked (GlcNAc...) asparagine). N-linked (GlcNAc...) asparagine glycans are attached at residues asparagine 420, asparagine 461, and asparagine 542. A helical membrane pass occupies residues 620 to 640 (GALIAILACIFVLLVLVLLIL). Residues 641–801 (SMRRHRKQPY…GASEGPAPLW (161 aa)) lie on the Cytoplasmic side of the membrane.

Expressed in brain. Highest level of expression in the retina. In embryo it is synthesized by the forebrain, anterior neural ridge, developing visual system, primitive external granular layer of the cerebellum and a subset of neural crest cells likely to develop into melanoblasts.

It localises to the cell membrane. Its function is as follows. Cadherins are calcium-dependent cell adhesion proteins. They preferentially interact with themselves in a homophilic manner in connecting cells; cadherins may thus contribute to the sorting of heterogeneous cell types. The protein is Cadherin-20 (Cdh20) of Mus musculus (Mouse).